A 155-amino-acid polypeptide reads, in one-letter code: Small ribosomal subunit protein uS7 (155 aa).

This sequence belongs to the universal ribosomal protein uS7 family. Part of the 30S ribosomal subunit. Contacts proteins S9 and S11.

Functionally, one of the primary rRNA binding proteins, it binds directly to 16S rRNA where it nucleates assembly of the head domain of the 30S subunit. Is located at the subunit interface close to the decoding center, probably blocks exit of the E-site tRNA. The protein is Small ribosomal subunit protein uS7 of Cytophaga hutchinsonii (strain ATCC 33406 / DSM 1761 / CIP 103989 / NBRC 15051 / NCIMB 9469 / D465).